We begin with the raw amino-acid sequence, 193 residues long: 5'RNA triphosphatase A449R (193 aa).

Mn(2+) is required as a cofactor.

It catalyses the reaction a 5'-end triphospho-ribonucleoside in mRNA + H2O = a 5'-end diphospho-ribonucleoside in mRNA + phosphate + H(+). Functionally, catalyzes the first stes of cap formation: by removing the gamma-phosphate from the 5'-triphosphate end of nascent mRNA to yield a diphosphate end. The polypeptide is 5'RNA triphosphatase A449R (A449R) (Chlorella (PBCV-1)).